We begin with the raw amino-acid sequence, 287 residues long: Complement C1q-like protein 2 (287 aa).

The N-terminal stretch at 1 to 21 is a signal peptide; that stretch reads MALGLLIAVPLLLQAAPPGAA. Residues 65 to 144 are disordered; that stretch reads LSANPPPPFI…GTGGGGDTEG (80 aa). The Collagen-like domain maps to 76–118; sequence GPKGDPGRPGKPGPRGPPGEPGPPGPRGPPGEKGDSGRPGLPG. The segment covering 84 to 104 has biased composition (pro residues); sequence PGKPGPRGPPGEPGPPGPRGP. Residues 127–141 show a composition bias toward gly residues; it reads GGVGVVSGGTGGGGD. The 134-residue stretch at 154 to 287 folds into the C1q domain; it reads FSGPKIAFYV…TFSGFLLYPD (134 aa).

As to quaternary structure, forms homotrimers which can further assemble to form higher-order oligomeric complexes. Interacts with ADGRB3. May interact with ERFE. Forms heterooligomers with C1QL3 and C1QL4, when proteins are coexpressed; this interaction does not occur after secretion. Glycosylated, but not with N-linked glycans. As to expression, highest expression in eye, followed by placenta and brain, intermediate expression in adipose tissue and lowest expression in lymph node and testis.

It is found in the secreted. In terms of biological role, may regulate the number of excitatory synapses that are formed on hippocampus neurons. Has no effect on inhibitory synapses. This Mus musculus (Mouse) protein is Complement C1q-like protein 2 (C1ql2).